The chain runs to 636 residues: Chitin synthase VI (636 aa).

4 consecutive transmembrane segments (helical) span residues 23-43, 374-394, 399-419, and 427-447; these read LQWF…LFCI, TIRT…TTTA, LPVG…LYFG, and IWFY…YMVY. The interval 595–636 is disordered; that stretch reads QRLRLEQRPRTGPSLNARWQNGPQASETSQGRSQVDDVGIAF. Residues 607-627 are compositionally biased toward polar residues; that stretch reads PSLNARWQNGPQASETSQGRS.

This sequence belongs to the chitin synthase family. Class VI subfamily. In terms of tissue distribution, moderately expressed during appressorium formation.

It localises to the cell membrane. It catalyses the reaction [(1-&gt;4)-N-acetyl-beta-D-glucosaminyl](n) + UDP-N-acetyl-alpha-D-glucosamine = [(1-&gt;4)-N-acetyl-beta-D-glucosaminyl](n+1) + UDP + H(+). Functionally, polymerizes chitin, a structural polymer of the cell wall and septum, by transferring the sugar moiety of UDP-GlcNAc to the non-reducing end of the growing chitin polymer. Contributes to the production of conidia but is the only chitine synthase that does not contribute to the ability of fungal conidia to germinate. Involved in fungal stress tolerances. This is Chitin synthase VI from Metarhizium acridum (strain CQMa 102).